A 628-amino-acid chain; its full sequence is Basal cell adhesion molecule (628 aa).

The N-terminal stretch at 1–31 (MEPPDAPAQARGAPRLLLLAVLLAAHPDAQA) is a signal peptide. 2 consecutive Ig-like V-type domains span residues 32 to 142 (EVRL…ARLN) and 147 to 257 (PEAT…PTFH). Residues 32 to 547 (EVRLSVPPLV…GTVSPQTSQA (516 aa)) lie on the Extracellular side of the membrane. Intrachain disulfides connect Cys-53–Cys-125, Cys-172–Cys-237, and Cys-291–Cys-337. Ig-like C2-type domains lie at 274–355 (PSTP…KTLE), 363–441 (PLEL…QNFT), and 448–541 (PELK…GTVS). The tract at residues 309–312 (EQEE) is interaction with laminin alpha5. N-linked (GlcNAc...) asparagine glycans are attached at residues Asn-321, Asn-377, Asn-383, Asn-419, and Asn-439. Cysteines 384 and 424 form a disulfide. Cys-473 and Cys-522 are joined by a disulfide. A helical membrane pass occupies residues 548–568 (GVAVMAVAVSVGLLLLVVAVF). Topologically, residues 569-628 (YCVRRKGGPCCRQRREKGAPPPGEPGLSHSGSEQPEQTGLLMGGASGGARGGSGGFGDEC) are cytoplasmic. A disordered region spans residues 579–628 (CRQRREKGAPPPGEPGLSHSGSEQPEQTGLLMGGASGGARGGSGGFGDEC). Residue Ser-596 is modified to Phosphoserine; by GSK3. Ser-598 carries the phosphoserine; by CK2 modification. Ser-600 is modified (phosphoserine). Over residues 609–628 (LMGGASGGARGGSGGFGDEC) the composition is skewed to gly residues. Position 621 is a phosphoserine; by PKA or PKB/AKT1 (Ser-621).

As to quaternary structure, homodimer. Interacts with ITGA4:ITGB1. Interacts with spectrins SPTA1 and SPTB1. In terms of processing, epinephrine-stimulated phosphorylation of Ser-621 by PKA enhances adhesion to laminin. Ser-621 can also be phosphorylated by AKT1. As to expression, wide tissue distribution (highest in the pancreas and very low in brain). Closely associated with the basal layer of cells in epithelia and the endothelium of blood vessel walls.

It is found in the cell membrane. Functionally, transmembrane glycoprotein that functions as both a receptor and an adhesion molecule playing a crucial role in cell adhesion, motility, migration and invasion. Extracellular domain enables binding to extracellular matrix proteins, such as laminin, integrin and other ligands while its intracellular domain interacts with cytoskeletal proteins like hemoglobin, facilitating cell signal transduction. Serves as a receptor for laminin alpha-5/LAMA5 to promote cell adhesion. Mechanistically, JAK2 induces BCAM phosphorylation and activates its adhesion to laminin by stimulating a Rap1/AKT signaling pathway in the absence of EPOR. The polypeptide is Basal cell adhesion molecule (BCAM) (Homo sapiens (Human)).